A 134-amino-acid chain; its full sequence is Ribonuclease VapC11 (134 aa).

The region spanning 2–126 (ILIDTSAWVE…ADFDVIARIT (125 aa)) is the PINc domain. The Mg(2+) site is built by Asp5 and Asp98.

The protein belongs to the PINc/VapC protein family. The cofactor is Mg(2+).

In terms of biological role, toxic component of a type II toxin-antitoxin (TA) system. Acts as an RNase. Its toxic effects on cell growth and colony formation are neutralized by coexpression with cognate antitoxin VapB11. This chain is Ribonuclease VapC11, found in Mycobacterium tuberculosis (strain CDC 1551 / Oshkosh).